Here is a 153-residue protein sequence, read N- to C-terminus: D-aminoacyl-tRNA deacylase (153 aa).

The short motif at 142-143 (GP) is the Gly-cisPro motif, important for rejection of L-amino acids element.

Belongs to the DTD family. As to quaternary structure, homodimer.

The protein resides in the cytoplasm. The catalysed reaction is glycyl-tRNA(Ala) + H2O = tRNA(Ala) + glycine + H(+). It carries out the reaction a D-aminoacyl-tRNA + H2O = a tRNA + a D-alpha-amino acid + H(+). Functionally, an aminoacyl-tRNA editing enzyme that deacylates mischarged D-aminoacyl-tRNAs. Also deacylates mischarged glycyl-tRNA(Ala), protecting cells against glycine mischarging by AlaRS. Acts via tRNA-based rather than protein-based catalysis; rejects L-amino acids rather than detecting D-amino acids in the active site. By recycling D-aminoacyl-tRNA to D-amino acids and free tRNA molecules, this enzyme counteracts the toxicity associated with the formation of D-aminoacyl-tRNA entities in vivo and helps enforce protein L-homochirality. This Acidovorax ebreus (strain TPSY) (Diaphorobacter sp. (strain TPSY)) protein is D-aminoacyl-tRNA deacylase.